We begin with the raw amino-acid sequence, 392 residues long: S-adenosylmethionine synthase (392 aa).

H22 is an ATP binding site. D24 lines the Mg(2+) pocket. Residue E50 coordinates K(+). The L-methionine site is built by E63 and Q106. The interval 106-116 (QSPDITQGVTL) is flexible loop. Residues 170-172 (DGK), 236-237 (KF), D245, 251-252 (RK), A268, and K272 each bind ATP. D245 serves as a coordination point for L-methionine. Residue K276 coordinates L-methionine.

This sequence belongs to the AdoMet synthase family. In terms of assembly, homotetramer; dimer of dimers. The cofactor is Mg(2+). Requires K(+) as cofactor.

Its subcellular location is the cytoplasm. It catalyses the reaction L-methionine + ATP + H2O = S-adenosyl-L-methionine + phosphate + diphosphate. It participates in amino-acid biosynthesis; S-adenosyl-L-methionine biosynthesis; S-adenosyl-L-methionine from L-methionine: step 1/1. In terms of biological role, catalyzes the formation of S-adenosylmethionine (AdoMet) from methionine and ATP. The overall synthetic reaction is composed of two sequential steps, AdoMet formation and the subsequent tripolyphosphate hydrolysis which occurs prior to release of AdoMet from the enzyme. The protein is S-adenosylmethionine synthase of Sulfurimonas denitrificans (strain ATCC 33889 / DSM 1251) (Thiomicrospira denitrificans (strain ATCC 33889 / DSM 1251)).